The sequence spans 495 residues: Cytochrome P450 2E1 (495 aa).

298–303 (FAGTET) contributes to the substrate binding site. Cys-437 contacts heme.

Belongs to the cytochrome P450 family. In terms of assembly, interacts with chaperones HSP70 and HSP90; this interaction is required for initial targeting to mitochondria. Heme is required as a cofactor.

Its subcellular location is the endoplasmic reticulum membrane. The protein localises to the microsome membrane. It localises to the mitochondrion inner membrane. It carries out the reaction an organic molecule + reduced [NADPH--hemoprotein reductase] + O2 = an alcohol + oxidized [NADPH--hemoprotein reductase] + H2O + H(+). The catalysed reaction is (5Z,8Z,11Z)-eicosatrienoate + reduced [NADPH--hemoprotein reductase] + O2 = 19-hydroxy-(5Z,8Z,11Z)-eicosatrienoate + oxidized [NADPH--hemoprotein reductase] + H2O + H(+). The enzyme catalyses (5Z,8Z,11Z,14Z,17Z)-eicosapentaenoate + reduced [NADPH--hemoprotein reductase] + O2 = 19-hydroxy-(5Z,8Z,11Z,14Z,17Z)-eicosapentaenoate + oxidized [NADPH--hemoprotein reductase] + H2O + H(+). It catalyses the reaction (4Z,7Z,10Z,13Z,16Z,19Z)-docosahexaenoate + reduced [NADPH--hemoprotein reductase] + O2 = 21-hydroxy-(4Z,7Z,10Z,13Z,16Z,19Z)-docosahexaenoate + oxidized [NADPH--hemoprotein reductase] + H2O + H(+). It carries out the reaction dodecanoate + reduced [NADPH--hemoprotein reductase] + O2 = 11-hydroxydodecanoate + oxidized [NADPH--hemoprotein reductase] + H2O + H(+). The catalysed reaction is tetradecanoate + reduced [NADPH--hemoprotein reductase] + O2 = 13-hydroxytetradecanoate + oxidized [NADPH--hemoprotein reductase] + H2O + H(+). The enzyme catalyses 4-nitrophenol + NADPH + O2 + H(+) = 4-nitrocatechol + NADP(+) + H2O. It participates in lipid metabolism; fatty acid metabolism. Its activity is regulated as follows. The omega-1 hydroxylase activity is stimulated by cytochrome b5. Its function is as follows. A cytochrome P450 monooxygenase involved in the metabolism of fatty acids. Mechanistically, uses molecular oxygen inserting one oxygen atom into a substrate, and reducing the second into a water molecule, with two electrons provided by NADPH via cytochrome P450 reductase (NADPH--hemoprotein reductase). Catalyzes the hydroxylation of carbon-hydrogen bonds. Hydroxylates fatty acids specifically at the omega-1 position displaying the highest catalytic activity for saturated fatty acids. May be involved in the oxidative metabolism of xenobiotics. In Bos taurus (Bovine), this protein is Cytochrome P450 2E1 (CYP2E1).